A 170-amino-acid polypeptide reads, in one-letter code: Flavodoxin (170 aa).

Residues 4–165 (IGLFYGTQTG…RIKTWVSQLK (162 aa)) enclose the Flavodoxin-like domain.

Belongs to the flavodoxin family. Requires FMN as cofactor.

Its function is as follows. Low-potential electron donor to a number of redox enzymes. In Synechococcus elongatus (strain ATCC 33912 / PCC 7942 / FACHB-805) (Anacystis nidulans R2), this protein is Flavodoxin (isiB).